Here is a 387-residue protein sequence, read N- to C-terminus: Gamma-butyrobetaine dioxygenase (387 aa).

Cys-38, Cys-40, Cys-43, and His-82 together coordinate Zn(2+). Fe cation-binding residues include His-202, Asp-204, and His-347. The residue at position 351 (Ser-351) is a Phosphoserine.

The protein belongs to the gamma-BBH/TMLD family. Fe(2+) serves as cofactor. It depends on L-ascorbate as a cofactor.

Its subcellular location is the cytoplasm. The catalysed reaction is 4-(trimethylamino)butanoate + 2-oxoglutarate + O2 = carnitine + succinate + CO2. It participates in amine and polyamine biosynthesis; carnitine biosynthesis. Catalyzes the formation of L-carnitine from gamma-butyrobetaine. This is Gamma-butyrobetaine dioxygenase (BBOX1) from Pongo abelii (Sumatran orangutan).